The primary structure comprises 541 residues: Forkhead box protein O (541 aa).

Over residues 118–150 (NEQCGQLGGASSNGSTAMLHTPDGSNSHQTSFP) the composition is skewed to polar residues. 2 disordered regions span residues 118 to 168 (NEQC…GKKT) and 252 to 291 (WVINPDAKPGRNPRRTRERSNTIETTTKAQLEKSRRGAKK). A DNA-binding region (fork-head) is located at residues 175-268 (WGNMSYAELI…KPGRNPRRTR (94 aa)). Thr273 is subject to Phosphothreonine. A Phosphoserine; by CaMK2 modification is found at Ser319.

Interacts with rle-1. Interacts with unc-43 and tax-6. Interacts with jnk-1. Interacts with ftt-2. Interacts with prmt-1. Interacts with hcf-1. Post-translationally, phosphorylated by akt-1 and/or akt-2. Phosphorylated by sgk-1. Phosphorylated by unc-43. Phosphorylated by jnk-1. Dephosphorylated by tax-6 in vitro. In terms of processing, ubiquitinated. Ubiquitination by rle-1 leads to proteasome-mediated degradation. Methylation by prmt-1 prevents phosphorylation and promotes translocation to the nucleus to allow for daf-16-dependent transcription. Isoform b and isoform c are expressed in ectoderm, muscles, intestine and neurons. Isoform b is also expressed in the pharynx. The intestine appears to be the primary site of longevity function.

The protein resides in the nucleus. The protein localises to the cytoplasm. Functionally, forkhead-type transcription factor. Binds to the promoters of genes that contain the daf-16/FOXO binding element (DBE), TTGTTTAC, in their regulatory region. Functions in the Insulin/IGF-1-like signaling (IIS) mediated pathway which affects lipogenesis, lifespan, starvation survival, heat shock and oxidative stress responses, sleep, associative memory, and dauer formation. Longevity signaling predominantly arises from expression in the intestine. Acts in the intestine to mediate the role of slo-1 in age-associated decline in motor activity and longevity. Transcriptional activity of daf-16/FOXO is negatively regulated by interaction with host cell factor homolog hcf-1; and by cytoplasmic sequestration by association with ftt-2. Inhibition is required for the carbon dioxide (CO2) avoidance response. Upon loss of inhibition, daf-16 translocates to the nucleus to regulate genes that result in delayed reproduction and growth while increasing stress resistance starvation tolerance and longevity. Association with arginine methyltransferase prmt-1 prevents phosphorylation and allows for translocation to the nucleus and the subsequent transcription of longevity-related genes. Modulation of its activity by cGMP levels in sensory neurons regulates lifespan. Has a protective role against muscle dystrophy. Involved in mediating protection against aberrant protein aggregation proteotoxicity. Influences transcription of genes that code for proteins involved in immunity as part of a general stress response. Targets genes that inhibit and stimulate tumor growth. Targets kinases, phosphatases and transcription factors that are primarily involved in signaling and gene regulation. Thought to regulate ins-7 in FOXO-to-FOXO signaling, which coordinates daf-16 expression. Activity is positively regulated by shc-1-mediated inhibition of daf-2 and activation of JNK pathway. Through the regulation of its activity by shc-1-mediated inhibition of daf-2 and activation of JNK pathway, plays a role in maintaining the integrity of the gonad. Functions by indirect interaction with jnk-1 of the mitogen-activated protein kinase (MAPK) pathway. Involved in increased proteasome activity by activating expression of rpn-6.1 in response to proteotoxic stress, leading to enhanced assembly of the 26S proteasome, followed by higher proteasome activity. Also regulates proteasome activity in the intestine by preventing expression of deubiquitinase ubh-4. Represses transcription of natc-1. Involved in regulation of srh-234 expression. Binds to the promoter of the AMPK-gamma regulatory subunit, aakg-4, and activates its transcription. Also activates transcription of AMPK-gamma regulatory subunit, aakg-1. Maintains endoplasmic reticulum (ER) function by inducing protein degradation and elimination to remove misfolded secretory proteins from the ER independently of the ire-1/xbp-1 unfolded protein response pathway. Regulates epidermal innate immunity to nematophagous fungal infection and physical wounding which trigger bli-3 induced ROS release, leading to daf-16 activation independently of daf-2 signaling. May negatively regulate resistance to stress caused by oxidized cholesterol adducts by preventing the activation of daf-9 and nuclear hormone receptor daf-12, two members of the steroid signaling pathway. Promotes apoptosis during embryonic development. Probably through the regulation of the autophagy genes atg-18 and atg-16.2, plays a role in regulating stem cell number in the germline during larval development. Plays a role in learning and memory; including associative memory, and aversive gustatory associated learning known as salt avoidance learning. Plays a role in regulating gene transcription in response to white light exposure. Binds to the promoter of dex-1 to positively regulate its expression in seam cells during the dauer phase. Plays a role in transgenerational lipid accumulation in response to a high-fat diet. Functions in the Insulin/IGF-1-like signaling (IIS) mediated pathway. May play a role in lifespan modulation, but less significant than that played by isoforms d and f. Its function is as follows. Functions in the Insulin/IGF-1-like signaling (IIS) mediated pathway. Transcript level in the early adult may play a role in lifespan modulation, but effect is more significant than that played by isoform a. This chain is Forkhead box protein O, found in Caenorhabditis elegans.